The following is a 78-amino-acid chain: Small ribosomal subunit protein eS17 (78 aa).

The protein belongs to the eukaryotic ribosomal protein eS17 family.

This Sulfurisphaera tokodaii (strain DSM 16993 / JCM 10545 / NBRC 100140 / 7) (Sulfolobus tokodaii) protein is Small ribosomal subunit protein eS17.